A 584-amino-acid chain; its full sequence is Arginine--tRNA ligase (584 aa).

Residues 126–136 (PNIAKEMHVGH) carry the 'HIGH' region motif.

Belongs to the class-I aminoacyl-tRNA synthetase family. As to quaternary structure, monomer.

It is found in the cytoplasm. It catalyses the reaction tRNA(Arg) + L-arginine + ATP = L-arginyl-tRNA(Arg) + AMP + diphosphate. This Synechocystis sp. (strain ATCC 27184 / PCC 6803 / Kazusa) protein is Arginine--tRNA ligase (argS).